The chain runs to 191 residues: Peptidyl-tRNA hydrolase (191 aa).

Residue tyrosine 16 coordinates tRNA. The Proton acceptor role is filled by histidine 21. TRNA contacts are provided by phenylalanine 66, asparagine 68, and asparagine 114.

This sequence belongs to the PTH family. Monomer.

The protein resides in the cytoplasm. It catalyses the reaction an N-acyl-L-alpha-aminoacyl-tRNA + H2O = an N-acyl-L-amino acid + a tRNA + H(+). Hydrolyzes ribosome-free peptidyl-tRNAs (with 1 or more amino acids incorporated), which drop off the ribosome during protein synthesis, or as a result of ribosome stalling. In terms of biological role, catalyzes the release of premature peptidyl moieties from peptidyl-tRNA molecules trapped in stalled 50S ribosomal subunits, and thus maintains levels of free tRNAs and 50S ribosomes. This Geotalea daltonii (strain DSM 22248 / JCM 15807 / FRC-32) (Geobacter daltonii) protein is Peptidyl-tRNA hydrolase.